Consider the following 110-residue polypeptide: Large ribosomal subunit protein uL22 (110 aa).

This sequence belongs to the universal ribosomal protein uL22 family. In terms of assembly, part of the 50S ribosomal subunit.

In terms of biological role, this protein binds specifically to 23S rRNA; its binding is stimulated by other ribosomal proteins, e.g. L4, L17, and L20. It is important during the early stages of 50S assembly. It makes multiple contacts with different domains of the 23S rRNA in the assembled 50S subunit and ribosome. Functionally, the globular domain of the protein is located near the polypeptide exit tunnel on the outside of the subunit, while an extended beta-hairpin is found that lines the wall of the exit tunnel in the center of the 70S ribosome. The polypeptide is Large ribosomal subunit protein uL22 (Shewanella amazonensis (strain ATCC BAA-1098 / SB2B)).